The sequence spans 330 residues: Mas-related G-protein coupled receptor member B8 (330 aa).

Residues 1–33 (MDSSFPDWNIEFREQNESYFMESSSCDMSLAMS) lie on the Extracellular side of the membrane. Asn16 carries N-linked (GlcNAc...) asparagine glycosylation. The helical transmembrane segment at 34 to 54 (LLSIIIAIIGLTGNVIVLQLL) threads the bilayer. The Cytoplasmic segment spans residues 55 to 62 (GFHMHRNA). A helical membrane pass occupies residues 63-83 (FSVYIFNLSGANFLFLCTHIV). Over 84-101 (FSLENLIRQFHYIDIHMA) the chain is Extracellular. A helical transmembrane segment spans residues 102 to 122 (LFSVNVTILAYLAGVSMITAI). Topologically, residues 123-146 (SVEYWLSVLWPTWYHAQRPKHTST) are cytoplasmic. A helical transmembrane segment spans residues 147–167 (VICTLLWVFSLLLTLWNWIIC). Residues 168-177 (KVLDYIYNWD) lie on the Extracellular side of the membrane. Residues 178–198 (MCWKLALIIVVWLLVLFVVLS) traverse the membrane as a helical segment. The Cytoplasmic segment spans residues 199 to 219 (RSNQALLFRVFCGSQQTPVTR). Residues 220-240 (LLVTIMLTALVVLICGFGIGI) form a helical membrane-spanning segment. The Extracellular portion of the chain corresponds to 241-260 (CFFYWKKEENSIMPCGYFYE). A helical transmembrane segment spans residues 261-281 (TILLLSGVNSCANPIICLFVG). Over 282-330 (SIKHCQFQCGTLRLILQRAIQESPEEEDEEVEEVVEQEGGEEDEESTTL) the chain is Cytoplasmic. The segment at 302-330 (QESPEEEDEEVEEVVEQEGGEEDEESTTL) is disordered. The segment covering 304-330 (SPEEEDEEVEEVVEQEGGEEDEESTTL) has biased composition (acidic residues).

This sequence belongs to the G-protein coupled receptor 1 family. Mas subfamily.

It localises to the membrane. Functionally, orphan receptor. Probably involved in the function of nociceptive neurons. May regulate nociceptor function and/or development, including the sensation or modulation of pain. The chain is Mas-related G-protein coupled receptor member B8 (Mrgprb8) from Mus musculus (Mouse).